The sequence spans 360 residues: Putative beta-glucosidase 15 (360 aa).

2 stretches are compositionally biased toward basic and acidic residues: residues 1-11 (MARRRMGEEGK) and 47-67 (GRREEDDAGGREKGEKRERKG). 2 disordered regions span residues 1 to 21 (MARRRMGEEGKGGGWGLNGRQ) and 35 to 103 (GWRS…RAER). Over residues 75–86 (GKRRRERRRGGR) the composition is skewed to basic residues. Tyr-183 contributes to the a beta-D-glucoside binding site. A disulfide bridge connects residues Cys-191 and Cys-196. A beta-D-glucoside contacts are provided by residues Glu-254, Trp-301, 308-309 (EW), and Phe-317. Glu-254 (nucleophile) is an active-site residue. Asn-346 carries an N-linked (GlcNAc...) asparagine glycan.

It belongs to the glycosyl hydrolase 1 family.

The catalysed reaction is Hydrolysis of terminal, non-reducing beta-D-glucosyl residues with release of beta-D-glucose.. The protein is Putative beta-glucosidase 15 (BGLU15) of Oryza sativa subsp. japonica (Rice).